We begin with the raw amino-acid sequence, 174 residues long: SUSHI domain-containing protein E3 (174 aa).

An N-terminal signal peptide occupies residues 1-20 (MATEVQFACALVVLLGCGYA). One can recognise a Sushi domain in the interval 35–97 (QNCTTYPSIE…WTNGPPSCVK (63 aa)). Intrachain disulfides connect C37/C78 and C64/C95. Positions 108–127 (STSTTPVTTGTFPDPQNTTH) are enriched in low complexity. The disordered stretch occupies residues 108–133 (STSTTPVTTGTFPDPQNTTHPTHHTV). A helical membrane pass occupies residues 145–165 (FGYTPWAIITLVVIILLVVWI).

Its subcellular location is the host membrane. The chain is SUSHI domain-containing protein E3 (E3) from Equine herpesvirus 2 (strain 86/87) (EHV-2).